Consider the following 432-residue polypeptide: Lecithin-cholesterol acyltransferase-like 1 (432 aa).

The helical transmembrane segment at 7 to 29 (HYSVVIAILVVVTMTSMCQAVGS) threads the bilayer. The Acyl-ester intermediate role is filled by Ser209. Active-site charge relay system residues include Asp374 and His400.

Belongs to the AB hydrolase superfamily. Lipase family.

It localises to the membrane. The polypeptide is Lecithin-cholesterol acyltransferase-like 1 (LCAT1) (Arabidopsis thaliana (Mouse-ear cress)).